A 354-amino-acid polypeptide reads, in one-letter code: CCN family member 3 (354 aa).

Positions 1–21 (MSLFLRKRCLCLGFLLFHLLS) are cleaved as a signal peptide. The region spanning 25-99 (ASLRCPSRCP…NNQTGICMVP (75 aa)) is the IGFBP N-terminal domain. 6 disulfide bridges follow: cysteine 29-cysteine 55, cysteine 33-cysteine 57, cysteine 37-cysteine 58, cysteine 44-cysteine 61, cysteine 69-cysteine 83, and cysteine 75-cysteine 96. Residue asparagine 91 is glycosylated (N-linked (GlcNAc...) asparagine). A VWFC domain is found at 102 to 168 (DNCVFDGVIY…GECCEKWTCG (67 aa)). Residues 202-247 (NCIEQTTEWSACSKSCGMGVSTRVTNRNRQCEMVKQTRLCIVRPCE) form the TSP type-1 domain. The S-palmitoyl cysteine moiety is linked to residue cysteine 241. Intrachain disulfides connect cysteine 261–cysteine 298, cysteine 278–cysteine 312, cysteine 289–cysteine 328, cysteine 292–cysteine 330, and cysteine 297–cysteine 334. The region spanning 261–335 (CLRTKKSLKA…GTCTCYSNCP (75 aa)) is the CTCK domain. N-linked (GlcNAc...) asparagine glycosylation occurs at asparagine 277.

This sequence belongs to the CCN family. Interacts with FBLN1. Interacts (via CTCK domain) with NOTCH1 (via the EGF-like repeat region). Interacts with GJA1/CX43. Interacts with ITGA5:ITGB1, ITGAV:ITGB3 and ITGAV:ITGB5. Interacts with ZDHHC22; the interaction may lead to CCN3 palmitoylation. Post-translationally, may be palmitoylated on Cys-241, which is important for extracellular secretion. As to expression, expressed in large vessels including the ascending aorta, carotid arteries, and the thoracic aorta, in medium-sized vessels such as coronary arteries and small pulmonary veins and also in small vessels. In addition, also found to be present in the heart (at protein level). Expressed in astrocytes (at protein level). Detected in brain, bone, lung and muscle tissues. Expressed in skin, expression highly increases 5 days post-wounding, peaking on the 7th day to decline after 9 days. Expressed in pancreatic ducts and beta-cell islets. Expressed in the brain, in arcuate nucleus ESR1/KISS1 neurons, during lactation (at protein level).

It is found in the secreted. The protein localises to the cytoplasm. It localises to the cell junction. The protein resides in the gap junction. Its function is as follows. Immediate-early protein playing a role in various cellular processes including proliferation, adhesion, migration, differentiation and survival. Acts by binding to integrins or membrane receptors such as NOTCH1. Essential regulator of hematopoietic stem and progenitor cell function. Inhibits myogenic differentiation through the activation of Notch-signaling pathway. Inhibits vascular smooth muscle cells proliferation by increasing expression of cell-cycle regulators such as CDKN2B or CDKN1A independently of TGFB1 signaling. Ligand of integrins ITGAV:ITGB3 and ITGA5:ITGB1, acts directly upon endothelial cells to stimulate pro-angiogenic activities and induces angiogenesis. In endothelial cells, supports cell adhesion, induces directed cell migration (chemotaxis) and promotes cell survival. Also plays a role in cutaneous wound healing acting as integrin receptor ligand. Supports skin fibroblast adhesion through ITGA5:ITGB1 and ITGA6:ITGB1 and induces fibroblast chemotaxis through ITGAV:ITGB5. Seems to enhance bFGF-induced DNA synthesis in fibroblasts. Involved in bone regeneration as a negative regulator. Enhances the articular chondrocytic phenotype, whereas it repressed the one representing endochondral ossification. Impairs pancreatic beta-cell function, inhibits beta-cell proliferation and insulin secretion. Plays a role as negative regulator of endothelial pro-inflammatory activation reducing monocyte adhesion, its anti-inflammatory effects occur secondary to the inhibition of NF-kappaB signaling pathway. Contributes to the control and coordination of inflammatory processes in atherosclerosis. Attenuates inflammatory pain through regulation of IL1B- and TNF-induced MMP9, MMP2 and CCL2 expression. Inhibits MMP9 expression through ITGB1 engagement. Brain osteoanabolic hormone. During lactation, maintains the maternal skeleton and viability of offspring. In this context, may act on osteochondral skeletal stem cells. In Mus musculus (Mouse), this protein is CCN family member 3 (Ccn3).